Consider the following 198-residue polypeptide: Dephospho-CoA kinase (198 aa).

The DPCK domain occupies 3 to 198; that stretch reads VVGLTGGIGA…HRRYSLLAAA (196 aa). 11–16 is an ATP binding site; that stretch reads GAGKST.

The protein belongs to the CoaE family.

The protein resides in the cytoplasm. The enzyme catalyses 3'-dephospho-CoA + ATP = ADP + CoA + H(+). It participates in cofactor biosynthesis; coenzyme A biosynthesis; CoA from (R)-pantothenate: step 5/5. In terms of biological role, catalyzes the phosphorylation of the 3'-hydroxyl group of dephosphocoenzyme A to form coenzyme A. This chain is Dephospho-CoA kinase, found in Methylococcus capsulatus (strain ATCC 33009 / NCIMB 11132 / Bath).